A 148-amino-acid polypeptide reads, in one-letter code: MFALRSIRSATKAFQTTSIVSQRGFLQTTLKNVLFPTERQLRRQYLADNHIKVGSPEFDKFYEDLQPSELSKQSGLSDALLDDPILHICVIKYNKNIVQRYNLTPEQEKDIMENYNVSAGDPSLEQILPIPVPAHIFEELPIVKVLNN.

A mitochondrion-targeting transit peptide spans 1-24 (MFALRSIRSATKAFQTTSIVSQRG).

As to quaternary structure, slime mold cytochrome c oxidase consists of at least seven different polypeptides species, subunits I, II, III, IV, V, VI, and VIIe/s in order of MW.

It is found in the mitochondrion inner membrane. It carries out the reaction 4 Fe(II)-[cytochrome c] + O2 + 8 H(+)(in) = 4 Fe(III)-[cytochrome c] + 2 H2O + 4 H(+)(out). In terms of biological role, this protein is one of the nuclear-coded polypeptide chains of cytochrome c oxidase, the terminal oxidase in mitochondrial electron transport. This chain is Cytochrome c oxidase subunit 4, mitochondrial (cxdA), found in Dictyostelium discoideum (Social amoeba).